Here is a 695-residue protein sequence, read N- to C-terminus: Lysophospholipase 2 (695 aa).

Residues 1–19 form the signal peptide; it reads MQLSVLIASVLAAGAAVDA. N-linked (GlcNAc...) asparagine glycans are attached at residues Asn26, Asn72, Asn83, Asn115, Asn152, Asn171, Asn207, Asn269, Asn335, Asn379, Asn480, Asn504, Asn513, Asn532, Asn556, Asn573, Asn620, Asn626, Asn644, and Asn648. One can recognise a PLA2c domain in the interval 28–577; it reads SCPDNANFIR…TNYCWNGTID (550 aa). The interval 612 to 662 is disordered; the sequence is NTGSGTKSNSSSKTNSTLVTSSRATSTGTLISNSSSNSTVSSTAARSSTSS.

Belongs to the lysophospholipase family.

It localises to the secreted. The protein resides in the cell wall. The enzyme catalyses a 1-acyl-sn-glycero-3-phosphocholine + H2O = sn-glycerol 3-phosphocholine + a fatty acid + H(+). Functionally, catalyzes the release of fatty acids from lysophospholipids. Phospholipase B may well contribute to pathogenicity by abetting the fungus in damaging and traversing host cell membranes, processes which likely increase the rapidity of disseminated infection. This Candida glabrata (strain ATCC 2001 / BCRC 20586 / JCM 3761 / NBRC 0622 / NRRL Y-65 / CBS 138) (Yeast) protein is Lysophospholipase 2.